The following is a 159-amino-acid chain: Nutritionally-regulated adipose and cardiac-enriched protein homolog (159 aa).

The segment at 1-67 (MKTAVHALSP…GDEPRRTTRH (67 aa)) is disordered. Composition is skewed to basic and acidic residues over residues 12–25 (SRPETQHQTRKNEE) and 50–63 (SPQERCGRGDEPRR). A helical transmembrane segment spans residues 107-124 (LTACILLALALGMCCGQA).

The protein resides in the cell membrane. In Bos taurus (Bovine), this protein is Nutritionally-regulated adipose and cardiac-enriched protein homolog (NRAC).